The sequence spans 208 residues: ATP phosphoribosyltransferase (208 aa).

Belongs to the ATP phosphoribosyltransferase family. Short subfamily. In terms of assembly, heteromultimer composed of HisG and HisZ subunits.

The protein resides in the cytoplasm. The enzyme catalyses 1-(5-phospho-beta-D-ribosyl)-ATP + diphosphate = 5-phospho-alpha-D-ribose 1-diphosphate + ATP. It functions in the pathway amino-acid biosynthesis; L-histidine biosynthesis; L-histidine from 5-phospho-alpha-D-ribose 1-diphosphate: step 1/9. In terms of biological role, catalyzes the condensation of ATP and 5-phosphoribose 1-diphosphate to form N'-(5'-phosphoribosyl)-ATP (PR-ATP). Has a crucial role in the pathway because the rate of histidine biosynthesis seems to be controlled primarily by regulation of HisG enzymatic activity. The protein is ATP phosphoribosyltransferase of Clostridioides difficile (strain 630) (Peptoclostridium difficile).